Reading from the N-terminus, the 190-residue chain is RNA-binding protein OPG065 (190 aa).

The region spanning 5–70 (YIDERSDAEI…DIPPRWFMTT (66 aa)) is the Z-binding domain. Residues 117-184 (NPVTIINEYC…AKLAVDKLLG (68 aa)) enclose the DRBM domain.

Belongs to the orthopoxvirus OPG065 family. In terms of assembly, interacts with host G1P2/ISG15. Interacts with host EIF2AK2/PKR. Interacts with host ZBP1.

Functionally, RNA-binding protein that plays a role in the inhibition of multiple cellular antiviral responses activated by double-stranded RNA (dsRNA), such as inhibition of PKR activation, necroptosis, and IFN-mediated antiviral activities. Recognizes and binds Z-RNA structures via its Z-binding domain and dsRNA via its DRBM domain: RNA-binding activity is required to escape host ZBP1-dependent necroptosis. Mechanistically, the Z-binding domain binds Z-RNAs that are produced during vaccinia virus infection, thereby competing with Z-RNA detection by host ZBP1, suppressing ZBP1-dependent necroptosis. Acts as a key inhibitor of the interferon response by blocking the phosphorylation and subsequent activation of IRF3 and IRF7 kinases that are required for interferon-alpha gene expression. Inhibits NF-kappa-B activation and the ubiquitin-like protein ISG15, which is an early antiviral protein. The binding with host ISG15 subsequently blocks host ISGylation. The chain is RNA-binding protein OPG065 (OPG065) from Homo sapiens (Human).